Reading from the N-terminus, the 414-residue chain is Putative competence-damage inducible protein (414 aa).

It belongs to the CinA family.

The sequence is that of Putative competence-damage inducible protein from Listeria monocytogenes serotype 4a (strain HCC23).